The primary structure comprises 101 residues: Urease subunit beta (101 aa).

This sequence belongs to the urease beta subunit family. In terms of assembly, heterotrimer of UreA (gamma), UreB (beta) and UreC (alpha) subunits. Three heterotrimers associate to form the active enzyme.

Its subcellular location is the cytoplasm. The enzyme catalyses urea + 2 H2O + H(+) = hydrogencarbonate + 2 NH4(+). The protein operates within nitrogen metabolism; urea degradation; CO(2) and NH(3) from urea (urease route): step 1/1. The protein is Urease subunit beta of Actinobacillus pleuropneumoniae serotype 5b (strain L20).